Consider the following 100-residue polypeptide: Omega toxin Ap2 (100 aa).

The signal sequence occupies residues 1–22 (MNTTQVILFAVVLVLTVTVGQA). A propeptide spanning residues 23-57 (DEDSAETSLLRKLEEAEASMFGQYLEESKNSPEQR) is cleaved from the precursor. 3 disulfides stabilise this stretch: cysteine 58/cysteine 74, cysteine 65/cysteine 79, and cysteine 73/cysteine 94. Serine amide is present on serine 99.

The protein belongs to the neurotoxin 14 (magi-1) family. 08 (Ltx-4) subfamily. As to expression, expressed by the venom duct.

It localises to the secreted. Inhibits 31.17% of Cav2.1/CACNA1A current at 1 uM concentration. This is Omega toxin Ap2 from Acanthoscurria paulensis (Brazilian giant black tarantula spider).